We begin with the raw amino-acid sequence, 379 residues long: Chaperone protein DnaJ (379 aa).

Residues 5–69 enclose the J domain; it reads EYYERLGVDK…QKRAAYDQYG (65 aa). Residues 141 to 223 form a CR-type zinc finger; the sequence is GVEKQVKYNR…CHGSGHEKVA (83 aa). Zn(2+) is bound by residues cysteine 154, cysteine 157, cysteine 171, cysteine 174, cysteine 197, cysteine 200, and cysteine 214. CXXCXGXG motif repeat units lie at residues 154-161, 171-178, 197-204, and 211-218; these read CHTCGGSG, CHKCGGRG, CDVCHGTG, and STTCHGSG.

It belongs to the DnaJ family. Homodimer. The cofactor is Zn(2+).

The protein localises to the cytoplasm. Its function is as follows. Participates actively in the response to hyperosmotic and heat shock by preventing the aggregation of stress-denatured proteins and by disaggregating proteins, also in an autonomous, DnaK-independent fashion. Unfolded proteins bind initially to DnaJ; upon interaction with the DnaJ-bound protein, DnaK hydrolyzes its bound ATP, resulting in the formation of a stable complex. GrpE releases ADP from DnaK; ATP binding to DnaK triggers the release of the substrate protein, thus completing the reaction cycle. Several rounds of ATP-dependent interactions between DnaJ, DnaK and GrpE are required for fully efficient folding. Also involved, together with DnaK and GrpE, in the DNA replication of plasmids through activation of initiation proteins. The polypeptide is Chaperone protein DnaJ (Lactococcus lactis subsp. cremoris (Streptococcus cremoris)).